We begin with the raw amino-acid sequence, 805 residues long: Phenylalanine--tRNA ligase beta subunit (805 aa).

One can recognise a tRNA-binding domain in the interval 39–154; the sequence is SEGLKKVVVG…DDATPGDPVF (116 aa). In terms of domain architecture, B5 spans 410-485; the sequence is VQPTTVTIDL…RLYGYDNLPA (76 aa). Mg(2+) is bound by residues Asp463, Asp469, Glu472, and Glu473. In terms of domain architecture, FDX-ACB spans 712–805; that stretch reads SKFPSITRDV…LTDELGAEIR (94 aa).

The protein belongs to the phenylalanyl-tRNA synthetase beta subunit family. Type 1 subfamily. As to quaternary structure, tetramer of two alpha and two beta subunits. Mg(2+) serves as cofactor.

It localises to the cytoplasm. It catalyses the reaction tRNA(Phe) + L-phenylalanine + ATP = L-phenylalanyl-tRNA(Phe) + AMP + diphosphate + H(+). This Lactiplantibacillus plantarum (strain ATCC BAA-793 / NCIMB 8826 / WCFS1) (Lactobacillus plantarum) protein is Phenylalanine--tRNA ligase beta subunit.